The following is a 926-amino-acid chain: MHVKAETVLALLTPAPPSVVGQHVVDLSGDGWTLSSTALNRTVPGHLPSQVHLDLFEAGVIDIMASMILTFVGLRMPIGRIPATRLKAYFESTWLVFDGLDTFATITFCDQHVGSTDNQFRQHHFDVSQILKECKQDPVLRINFGSAPNIANTIAKSPDAEEWPPGVQITNEYPNRWYIRKEQSDFGWDWGPAFAPVGPWKPSYIVQNGHAELYVLNTDIDIYRQGQINYLPPDQSQPWIVNASIDFLGPVPCKPSMSIEIKDAATGSVLSSGLLQNVTVSGKSITGTTTIDGDAPKLWWPSGMGKQNLYNVTITVQNDMKKSLAKVTKRTGFRTIFLNQRNITDDQLAQGIAPGANWHFEINGYEFYTKGSNIIPPDAFWPRVTQARMARLFDAVTAGNQNMLRVWASGAYLHDFIYDLADEKGILLWSEFQFSDALYPVNDAFLENVAAEVVYNVRRVNHHPSLALWAGGNEIESLMLPMARRADPTGYSKYIGEYEKLYISLILPLVYENTRSITYSPSSTTEGYLYVNLSAPVPMAERYSNTTPGSYYGDTDYYNYDTSVSFDYNHYPVGRFANEFGFHSMPSLQTWQQAVDPEDLQFNSSVVVLRNHHYTAGGLFTDNFKNSSKGMGEMTMGVEAYYPIPSKSDSVANFSAWCHATQLFQADLYKSQIQFYRRGSGMPERQLGSLYWQLEDIWQAPTWAGIEYDGRWKVLHYVARDIYQPIIVSPFWNYTTGRLEVYVTSDLWEPAQGTVNLTWVDLSGKSIANNAGTPETVSFTVGALNTTNIYTTNISELSLPDLKDSILILSLSGEGRLPNASSKKAFVHQNHFTPVFPKDLSLKDPKLEVSYSPESRKFTVQATGGVSLYTWLDYPAGAVGYFEANAFVLLPGVPKEVSFVAQEGNVTDDWLQRVTVQSLWDQKVRD.

The N-terminal stretch at 1-21 is a signal peptide; it reads MHVKAETVLALLTPAPPSVVG. Asn-40, Asn-242, Asn-277, Asn-311, and Asn-342 each carry an N-linked (GlcNAc...) asparagine glycan. Catalysis depends on Glu-474, which acts as the Proton donor. N-linked (GlcNAc...) asparagine glycosylation is found at Asn-532, Asn-603, Asn-626, Asn-653, Asn-733, Asn-756, Asn-785, Asn-793, Asn-819, and Asn-905.

It belongs to the glycosyl hydrolase 2 family. Beta-mannosidase A subfamily. In terms of assembly, homodimer.

It localises to the secreted. The catalysed reaction is Hydrolysis of terminal, non-reducing beta-D-mannose residues in beta-D-mannosides.. It functions in the pathway glycan metabolism; N-glycan degradation. In terms of biological role, exoglycosidase that cleaves the single beta-linked mannose residue from the non-reducing end of beta-mannosidic oligosaccharides of various complexity and length. Involved in the degradation of polymeric mannan and galactomannan. The sequence is that of Beta-mannosidase A (mndA) from Aspergillus fumigatus (strain ATCC MYA-4609 / CBS 101355 / FGSC A1100 / Af293) (Neosartorya fumigata).